The sequence spans 685 residues: Heat shock protein homolog SSE1 (685 aa).

Residues 651–685 (QALRSNQEASKMADLSAKLAAQRKAEAEAKENAKE) form a disordered region. Residues 673–685 (RKAEAEAKENAKE) are compositionally biased toward basic and acidic residues.

Belongs to the heat shock protein 70 family.

The protein localises to the cytoplasm. The polypeptide is Heat shock protein homolog SSE1 (SSE1) (Naumovozyma castellii (Yeast)).